A 100-amino-acid polypeptide reads, in one-letter code: Small ribosomal subunit protein uS14c (100 aa).

Belongs to the universal ribosomal protein uS14 family. In terms of assembly, part of the 30S ribosomal subunit.

The protein localises to the plastid. It is found in the chloroplast. Its function is as follows. Binds 16S rRNA, required for the assembly of 30S particles. This chain is Small ribosomal subunit protein uS14c, found in Eucalyptus globulus subsp. globulus (Tasmanian blue gum).